The following is a 736-amino-acid chain: MSAPEPKITPELIASHGLKPDEYQRILDLIGREPTFTELGIFSAMWNEHCSYKSSRIHLKGLPTKAPWVLQGPGENAGVIDIGDNQAVVFKMESHNHPSYIEPYQGATTGVGGILRDVFTMGARPIACLNALSFGDPSHPKTRHLVSGVVAGVGGYGNSFGVPTVGGQTRFHTRYDGNILVNAMAVGLADADKIFLAAASGVGMPIVYLGSKTGRDGMGGATMASAEFDEGSDEKRPTVQVGDPFAEKLLLEACLEIMAKDCVIAIQDMGAAGLTCSAVEMGAKGDLGVELDLDAVPTRETGMTAYEMMLSESQERMLMVLKPEKEKEAEEIFKKWGLDFAIVGYTTPTKRFVVKHGGQVKADLPIKELGDEAPLYDRPWVESPKLPVIHARDINAPMGAAEALEKLLATPDLCSKRWVWEQYDHVIGGNTVQRPGGDAAVVRIEDGPKGLALTVDVTPRYCEADPFEGGKQAVAEAYRNITAVGGKPLAITDNLNFGNPERPEIMGQLVGCLKGISEACIALDSPIVSGNVSLYNETSGRGILPTPSIGGVGVLDDFTKSATLAFKAEGEAILLIGETKGWLGQSVYLREICGREEGAPPPVDLAVEKRHGDVVRGMIHAGTATAVHDVSDGGLLVAIAEMAIAGNIGASLDAPPGETVSHAWWFGEDQARYVVTVKEADLLAVKTKLKTIGVPCTQIGVTGGHALKIEGERTVDLKALRHAHEHWLPDYMGGKN.

Histidine 49 is a catalytic residue. ATP contacts are provided by tyrosine 52 and lysine 91. Glutamate 93 contributes to the Mg(2+) binding site. Substrate contacts are provided by residues 94-97 (SHNH) and arginine 116. Histidine 95 serves as the catalytic Proton acceptor. Aspartate 117 provides a ligand contact to Mg(2+). Glutamine 240 contributes to the substrate binding site. Residue aspartate 268 participates in Mg(2+) binding. 312 to 314 (ESQ) contributes to the substrate binding site. The ATP site is built by aspartate 493 and glycine 530. Asparagine 531 lines the Mg(2+) pocket. Serine 533 lines the substrate pocket.

The protein belongs to the FGAMS family. In terms of assembly, monomer. Part of the FGAM synthase complex composed of 1 PurL, 1 PurQ and 2 PurS subunits.

Its subcellular location is the cytoplasm. The enzyme catalyses N(2)-formyl-N(1)-(5-phospho-beta-D-ribosyl)glycinamide + L-glutamine + ATP + H2O = 2-formamido-N(1)-(5-O-phospho-beta-D-ribosyl)acetamidine + L-glutamate + ADP + phosphate + H(+). It functions in the pathway purine metabolism; IMP biosynthesis via de novo pathway; 5-amino-1-(5-phospho-D-ribosyl)imidazole from N(2)-formyl-N(1)-(5-phospho-D-ribosyl)glycinamide: step 1/2. Part of the phosphoribosylformylglycinamidine synthase complex involved in the purines biosynthetic pathway. Catalyzes the ATP-dependent conversion of formylglycinamide ribonucleotide (FGAR) and glutamine to yield formylglycinamidine ribonucleotide (FGAM) and glutamate. The FGAM synthase complex is composed of three subunits. PurQ produces an ammonia molecule by converting glutamine to glutamate. PurL transfers the ammonia molecule to FGAR to form FGAM in an ATP-dependent manner. PurS interacts with PurQ and PurL and is thought to assist in the transfer of the ammonia molecule from PurQ to PurL. In Rhodopseudomonas palustris (strain TIE-1), this protein is Phosphoribosylformylglycinamidine synthase subunit PurL.